Here is a 250-residue protein sequence, read N- to C-terminus: UPF0736 protein RBAM_011410 (250 aa).

The protein belongs to the UPF0736 family.

This is UPF0736 protein RBAM_011410 from Bacillus velezensis (strain DSM 23117 / BGSC 10A6 / LMG 26770 / FZB42) (Bacillus amyloliquefaciens subsp. plantarum).